Reading from the N-terminus, the 173-residue chain is Crossover junction endodeoxyribonuclease RuvC (173 aa).

Catalysis depends on residues aspartate 8, glutamate 67, and aspartate 139. Mg(2+)-binding residues include aspartate 8, glutamate 67, and aspartate 139.

It belongs to the RuvC family. As to quaternary structure, homodimer which binds Holliday junction (HJ) DNA. The HJ becomes 2-fold symmetrical on binding to RuvC with unstacked arms; it has a different conformation from HJ DNA in complex with RuvA. In the full resolvosome a probable DNA-RuvA(4)-RuvB(12)-RuvC(2) complex forms which resolves the HJ. It depends on Mg(2+) as a cofactor.

It localises to the cytoplasm. It catalyses the reaction Endonucleolytic cleavage at a junction such as a reciprocal single-stranded crossover between two homologous DNA duplexes (Holliday junction).. Functionally, the RuvA-RuvB-RuvC complex processes Holliday junction (HJ) DNA during genetic recombination and DNA repair. Endonuclease that resolves HJ intermediates. Cleaves cruciform DNA by making single-stranded nicks across the HJ at symmetrical positions within the homologous arms, yielding a 5'-phosphate and a 3'-hydroxyl group; requires a central core of homology in the junction. The consensus cleavage sequence is 5'-(A/T)TT(C/G)-3'. Cleavage occurs on the 3'-side of the TT dinucleotide at the point of strand exchange. HJ branch migration catalyzed by RuvA-RuvB allows RuvC to scan DNA until it finds its consensus sequence, where it cleaves and resolves the cruciform DNA. The chain is Crossover junction endodeoxyribonuclease RuvC from Shewanella sp. (strain ANA-3).